The chain runs to 422 residues: Serine hydroxymethyltransferase (422 aa).

(6S)-5,6,7,8-tetrahydrofolate is bound by residues Leu-113 and 117-119 (GHL). Position 222 is an N6-(pyridoxal phosphate)lysine (Lys-222).

The protein belongs to the SHMT family. In terms of assembly, homodimer. The cofactor is pyridoxal 5'-phosphate.

Its subcellular location is the cytoplasm. It catalyses the reaction (6R)-5,10-methylene-5,6,7,8-tetrahydrofolate + glycine + H2O = (6S)-5,6,7,8-tetrahydrofolate + L-serine. It participates in one-carbon metabolism; tetrahydrofolate interconversion. It functions in the pathway amino-acid biosynthesis; glycine biosynthesis; glycine from L-serine: step 1/1. Functionally, catalyzes the reversible interconversion of serine and glycine with tetrahydrofolate (THF) serving as the one-carbon carrier. This reaction serves as the major source of one-carbon groups required for the biosynthesis of purines, thymidylate, methionine, and other important biomolecules. Also exhibits THF-independent aldolase activity toward beta-hydroxyamino acids, producing glycine and aldehydes, via a retro-aldol mechanism. The chain is Serine hydroxymethyltransferase from Amoebophilus asiaticus (strain 5a2).